Consider the following 99-residue polypeptide: Plastocyanin (99 aa).

The region spanning 1-99 is the Plastocyanin-like domain; sequence AEVLLGSSDG…AGMVGKVTVN (99 aa). Residues histidine 37, cysteine 84, histidine 87, and methionine 92 each contribute to the Cu cation site.

This sequence belongs to the plastocyanin family. It depends on Cu(2+) as a cofactor.

The protein resides in the plastid. Its subcellular location is the chloroplast thylakoid membrane. Functionally, participates in electron transfer between P700 and the cytochrome b6-f complex in photosystem I. The polypeptide is Plastocyanin (PETE) (Lactuca sativa (Garden lettuce)).